Here is a 662-residue protein sequence, read N- to C-terminus: Pollen receptor-like kinase 1 (662 aa).

An N-terminal signal peptide occupies residues 1 to 31 (MPPMQARTLSVYNVMVPLVCLLLFFSTPTHG). Topologically, residues 32-256 (LSDSEAILKF…ARPKSSSRGP (225 aa)) are extracellular. LRR repeat units follow at residues 79-98 (QMEN…SGLT), 99-121 (SLRT…KKLA), 122-144 (ALKS…AFEG), 147-169 (WLKK…VAKL), 171-191 (KLLE…EFEH), and 192-214 (QLHL…LSMT). N-linked (GlcNAc...) asparagine glycosylation occurs at Asn197. The disordered stretch occupies residues 233–253 (ECDSPYIEHPPQSEARPKSSS). Residues 257–277 (LVITAIVAALTILIILGVIFL) traverse the membrane as a helical segment. Residues 278–662 (LNRSYKNKKP…GESCESISFA (385 aa)) lie on the Cytoplasmic side of the membrane. A disordered region spans residues 288–330 (RLAVETGPSSLQKKTGIREADQSRRDRKKADHRKGSGTTKRMG). Positions 357 to 639 (KASAEILGSG…EREGDDDDFY (283 aa)) constitute a Protein kinase domain. A Phosphoserine modification is found at Ser359. ATP is bound by residues 363 to 371 (LGSGCFGAS) and Lys385. A Phosphoserine modification is found at Ser437. Residue Thr457 is modified to Phosphothreonine. Tyr527 carries the post-translational modification Phosphotyrosine. Residues 636–662 (DDFYSTYVSETDGRSSKGESCESISFA) form a disordered region. The segment covering 646-655 (TDGRSSKGES) has biased composition (basic and acidic residues).

It belongs to the protein kinase superfamily. Ser/Thr protein kinase family. Interacts in vitro with ROPGEF1 (via PRONE domain). As to expression, expressed in pollen and/or in flowers, but not in leaves.

Its subcellular location is the cell membrane. It carries out the reaction L-seryl-[protein] + ATP = O-phospho-L-seryl-[protein] + ADP + H(+). It catalyses the reaction L-threonyl-[protein] + ATP = O-phospho-L-threonyl-[protein] + ADP + H(+). Receptor-like kinase involved in the control of pollen germination and pollen tube polar growth. The sequence is that of Pollen receptor-like kinase 1 from Arabidopsis thaliana (Mouse-ear cress).